Here is a 316-residue protein sequence, read N- to C-terminus: tRNA methyltransferase 10 homolog B (316 aa).

The stretch at 73–98 (EKIVAAKKSKRKQEKERRKANRVENS) forms a coiled coil. The segment at 77 to 96 (AAKKSKRKQEKERRKANRVE) is disordered. One can recognise an SAM-dependent MTase TRM10-type domain in the interval 113 to 310 (IKERLLEAKH…KGVSSRKGYV (198 aa)).

The protein belongs to the class IV-like SAM-binding methyltransferase superfamily. TRM10 family.

It carries out the reaction guanosine(9) in tRNA + S-adenosyl-L-methionine = N(1)-methylguanosine(9) in tRNA + S-adenosyl-L-homocysteine + H(+). In terms of biological role, S-adenosyl-L-methionine-dependent guanine N(1)-methyltransferase that catalyzes the formation of N(1)-methylguanine at position 9 (m1G9) in tRNAs. Probably not able to catalyze formation of N(1)-methyladenine at position 9 (m1A9) in tRNAs. This Bos taurus (Bovine) protein is tRNA methyltransferase 10 homolog B (TRMT10B).